A 339-amino-acid polypeptide reads, in one-letter code: MTPKVMIILGSGSDIAIAEKSMKILEKLEIPYSLKIASAHRTPDLVRELVVQGTNAGIKVFIGIAGLAAHLPGAIAAYTHKPVIGVPVDVKVSGLDALYSSVQMPYPSPVATVGIDRGDNGAILAARILGLYDEEIRKKVLESKEGYRQKVIKNNEEIVQKIDNPHITNDFLRIKNLELNETTEEFNGSYINKNAEVVIIVGRHTDLITGKKVSVTLDRLKIPHDMQVICPIRSGKKFRAYVNTMKNAKIFIGINSNSSQVSGGLVGLTEKPVIGVPCENELGNNYLLSTVNMPPGVPVATVGVNNGRNAAVLSGEILSINNPVLLELLEKLKNKKINI.

Ser-11, Asp-14, and Arg-41 together coordinate substrate.

This sequence belongs to the AIR carboxylase family. Class I subfamily.

The enzyme catalyses 5-carboxyamino-1-(5-phospho-D-ribosyl)imidazole + H(+) = 5-amino-1-(5-phospho-D-ribosyl)imidazole-4-carboxylate. Its pathway is purine metabolism; IMP biosynthesis via de novo pathway; 5-amino-1-(5-phospho-D-ribosyl)imidazole-4-carboxylate from 5-amino-1-(5-phospho-D-ribosyl)imidazole (N5-CAIR route): step 2/2. Catalyzes the conversion of N5-carboxyaminoimidazole ribonucleotide (N5-CAIR) to 4-carboxy-5-aminoimidazole ribonucleotide (CAIR). The sequence is that of Probable N5-carboxyaminoimidazole ribonucleotide mutase from Methanobrevibacter smithii.